Here is a 190-residue protein sequence, read N- to C-terminus: Xanthine phosphoribosyltransferase 1 (190 aa).

2 residues coordinate xanthine: L20 and N27. Residue 129–133 (AQGCA) participates in 5-phospho-alpha-D-ribose 1-diphosphate binding. Position 157 (K157) interacts with xanthine.

Belongs to the purine/pyrimidine phosphoribosyltransferase family. Xpt subfamily. As to quaternary structure, homodimer.

It localises to the cytoplasm. The catalysed reaction is XMP + diphosphate = xanthine + 5-phospho-alpha-D-ribose 1-diphosphate. Its pathway is purine metabolism; XMP biosynthesis via salvage pathway; XMP from xanthine: step 1/1. Its function is as follows. Converts the preformed base xanthine, a product of nucleic acid breakdown, to xanthosine 5'-monophosphate (XMP), so it can be reused for RNA or DNA synthesis. The polypeptide is Xanthine phosphoribosyltransferase 1 (Clostridium perfringens (strain ATCC 13124 / DSM 756 / JCM 1290 / NCIMB 6125 / NCTC 8237 / Type A)).